We begin with the raw amino-acid sequence, 219 residues long: Protein-L-isoaspartate O-methyltransferase (219 aa).

Ser65 is an active-site residue.

It belongs to the methyltransferase superfamily. L-isoaspartyl/D-aspartyl protein methyltransferase family. As to quaternary structure, monomer.

It is found in the cytoplasm. The enzyme catalyses [protein]-L-isoaspartate + S-adenosyl-L-methionine = [protein]-L-isoaspartate alpha-methyl ester + S-adenosyl-L-homocysteine. In terms of biological role, catalyzes the methyl esterification of L-isoaspartyl residues in peptides and proteins that result from spontaneous decomposition of normal L-aspartyl and L-asparaginyl residues. It plays a role in the repair and/or degradation of damaged proteins. This is Protein-L-isoaspartate O-methyltransferase (pcm) from Pyrococcus furiosus (strain ATCC 43587 / DSM 3638 / JCM 8422 / Vc1).